The primary structure comprises 450 residues: Ig mu chain C region (450 aa).

This chain is Ig mu chain C region, found in Canis lupus familiaris (Dog).